Consider the following 480-residue polypeptide: tRNA-2-methylthio-N(6)-dimethylallyladenosine synthase (480 aa).

In terms of domain architecture, MTTase N-terminal spans 32–149; sequence RKLYIRTFGC…LPELIRRRRA (118 aa). Residues cysteine 41, cysteine 78, cysteine 112, cysteine 186, cysteine 190, and cysteine 193 each coordinate [4Fe-4S] cluster. The Radical SAM core domain occupies 172-405; that stretch reads RIEGATAFVS…QALINAQAAA (234 aa). The TRAM domain occupies 408 to 471; the sequence is QAMVGTRQRL…PNSLRARVAD (64 aa).

The protein belongs to the methylthiotransferase family. MiaB subfamily. Monomer. [4Fe-4S] cluster serves as cofactor.

The protein localises to the cytoplasm. The enzyme catalyses N(6)-dimethylallyladenosine(37) in tRNA + (sulfur carrier)-SH + AH2 + 2 S-adenosyl-L-methionine = 2-methylsulfanyl-N(6)-dimethylallyladenosine(37) in tRNA + (sulfur carrier)-H + 5'-deoxyadenosine + L-methionine + A + S-adenosyl-L-homocysteine + 2 H(+). Functionally, catalyzes the methylthiolation of N6-(dimethylallyl)adenosine (i(6)A), leading to the formation of 2-methylthio-N6-(dimethylallyl)adenosine (ms(2)i(6)A) at position 37 in tRNAs that read codons beginning with uridine. The polypeptide is tRNA-2-methylthio-N(6)-dimethylallyladenosine synthase (Bordetella petrii (strain ATCC BAA-461 / DSM 12804 / CCUG 43448)).